A 376-amino-acid chain; its full sequence is Beta-centractin (376 aa).

Residue methionine 1 is modified to N-acetylmethionine. Tyrosine 4 carries the post-translational modification 3'-nitrotyrosine.

This sequence belongs to the actin family. ARP1 subfamily.

It localises to the cytoplasm. The protein resides in the cytoskeleton. It is found in the microtubule organizing center. The protein localises to the centrosome. Functionally, component of a multi-subunit complex involved in microtubule based vesicle motility. It is associated with the centrosome. This chain is Beta-centractin (Actr1b), found in Mus musculus (Mouse).